The primary structure comprises 214 residues: MAEESGQRAKGTVKWFSDQKGFGFITPDDGGEDLFVHQSGIRSEGFRSLAEGETVEFEVESGGDGRTKAVDVTGPDGAAVQGGRGGGGGGGGRGGGGYGGGSGGYGGGGRGGSRGYGGGDGGYGGGGGYGGGSRYGGGGGGYGGGGGYGGGGSGGGSGCFKCGESGHFARDCSQSGGGGGGGRFGGGGGGGGGGGCYKCGEDGHFARECTSGGR.

Residues 8-75 (RAKGTVKWFS…RTKAVDVTGP (68 aa)) form the CSD domain. A disordered region spans residues 54–91 (TVEFEVESGGDGRTKAVDVTGPDGAAVQGGRGGGGGGG). The segment covering 80-91 (VQGGRGGGGGGG) has biased composition (gly residues). 2 CCHC-type zinc fingers span residues 157 to 174 (SGCF…DCSQ) and 194 to 211 (GGCY…ECTS).

This is Glycine-rich protein 2 (GRP-2) from Nicotiana sylvestris (Wood tobacco).